A 236-amino-acid chain; its full sequence is Small ribosomal subunit protein uS2c (236 aa).

The protein belongs to the universal ribosomal protein uS2 family.

It is found in the plastid. Its subcellular location is the chloroplast. The sequence is that of Small ribosomal subunit protein uS2c (rps2) from Piper cenocladum (Ant piper).